The following is a 599-amino-acid chain: MSDLSHIRNFSIIAHIDHGKSTLADRFIQMCGGLTAREMEAQVLDSMDLERERGITIKAHSVTLHYKAQDGKTYQLNFIDTPGHVDFTYEVSRSLAACEGALLVVDAGQGVEAQSVANCYTAIEQGLEVMPVLNKMDLPQADPDRVKDEIEKIIGIDATDAVACSAKSGMGVDEVLERLVQSIPAPEGEIDAPLQALIIDSWFDNYLGVVSLVRVRQGRVKKGDKILVKSTGKVHLVDSVGVFTPKHTQTADLKAGEVGFIIASIKDIHGAPVGDTLTLSNTPEVEVLPGFKKIQPQVYAGLFPVSSDDFEDFRDALQKLTLNDSSLQYMPESSDALGFGFRCGFLGMLHMEIIQERLEREYDLDLITTAPSVIYELELKTGETITVDNPSKLPDVSAVNDFREPIVTATILVPQEHLGNVITLCIEKRGVQRDMQFLGSQVQVRYDLPMNEVVLDFFDRLKSTSRGYASLDYHFDRYQSANLVKLDVLINGDKVDALALIVHRDNAAYKGRALTEKMKELIPRQMFDVAIQAAIGGQIIARTTVKALRKNVLAKCYGGDVSRKKKLLEKQKAGKKRMKQVGNVEIPQEAFLAVLRLDS.

Residues 5–187 (SHIRNFSIIA…RLVQSIPAPE (183 aa)) enclose the tr-type G domain. GTP-binding positions include 17–22 (DHGKST) and 134–137 (NKMD).

It belongs to the TRAFAC class translation factor GTPase superfamily. Classic translation factor GTPase family. LepA subfamily.

The protein localises to the cell inner membrane. It catalyses the reaction GTP + H2O = GDP + phosphate + H(+). In terms of biological role, required for accurate and efficient protein synthesis under certain stress conditions. May act as a fidelity factor of the translation reaction, by catalyzing a one-codon backward translocation of tRNAs on improperly translocated ribosomes. Back-translocation proceeds from a post-translocation (POST) complex to a pre-translocation (PRE) complex, thus giving elongation factor G a second chance to translocate the tRNAs correctly. Binds to ribosomes in a GTP-dependent manner. This Pseudomonas entomophila (strain L48) protein is Elongation factor 4.